A 383-amino-acid chain; its full sequence is 1-deoxy-D-xylulose 5-phosphate reductoisomerase (383 aa).

NADPH contacts are provided by Thr-10, Gly-11, Ser-12, Ile-13, Asn-38, and Asn-121. Lys-122 is a 1-deoxy-D-xylulose 5-phosphate binding site. Glu-123 contacts NADPH. Residue Asp-147 coordinates Mn(2+). 1-deoxy-D-xylulose 5-phosphate is bound by residues Ser-148, Glu-149, Ser-172, and His-195. Residue Glu-149 participates in Mn(2+) binding. NADPH is bound at residue Gly-201. Positions 208, 213, 214, and 217 each coordinate 1-deoxy-D-xylulose 5-phosphate. Glu-217 is a Mn(2+) binding site.

This sequence belongs to the DXR family. The cofactor is Mg(2+). Mn(2+) serves as cofactor.

The catalysed reaction is 2-C-methyl-D-erythritol 4-phosphate + NADP(+) = 1-deoxy-D-xylulose 5-phosphate + NADPH + H(+). The protein operates within isoprenoid biosynthesis; isopentenyl diphosphate biosynthesis via DXP pathway; isopentenyl diphosphate from 1-deoxy-D-xylulose 5-phosphate: step 1/6. Catalyzes the NADPH-dependent rearrangement and reduction of 1-deoxy-D-xylulose-5-phosphate (DXP) to 2-C-methyl-D-erythritol 4-phosphate (MEP). This is 1-deoxy-D-xylulose 5-phosphate reductoisomerase from Vesicomyosocius okutanii subsp. Calyptogena okutanii (strain HA).